Reading from the N-terminus, the 283-residue chain is Energy-coupling factor transporter ATP-binding protein EcfA1 (283 aa).

The ABC transporter domain occupies 7 to 244; sequence VEFRHVSFTY…PELLQEIGLD (238 aa). 41–48 serves as a coordination point for ATP; that stretch reads GHNGSGKS.

Belongs to the ABC transporter superfamily. Energy-coupling factor EcfA family. In terms of assembly, forms a stable energy-coupling factor (ECF) transporter complex composed of 2 membrane-embedded substrate-binding proteins (S component), 2 ATP-binding proteins (A component) and 2 transmembrane proteins (T component).

Its subcellular location is the cell membrane. Functionally, ATP-binding (A) component of a common energy-coupling factor (ECF) ABC-transporter complex. Unlike classic ABC transporters this ECF transporter provides the energy necessary to transport a number of different substrates. This is Energy-coupling factor transporter ATP-binding protein EcfA1 from Lactobacillus acidophilus (strain ATCC 700396 / NCK56 / N2 / NCFM).